The following is an 81-amino-acid chain: D-alanyl carrier protein (81 aa).

The region spanning 1-81 (MADEAIKNGV…KIIAKVEQAQ (81 aa)) is the Carrier domain. Serine 39 is modified (O-(pantetheine 4'-phosphoryl)serine).

Belongs to the DltC family. 4'-phosphopantetheine is transferred from CoA to a specific serine of apo-DCP.

It is found in the cytoplasm. It participates in cell wall biogenesis; lipoteichoic acid biosynthesis. Functionally, carrier protein involved in the D-alanylation of lipoteichoic acid (LTA). The loading of thioester-linked D-alanine onto DltC is catalyzed by D-alanine--D-alanyl carrier protein ligase DltA. The DltC-carried D-alanyl group is further transferred to cell membrane phosphatidylglycerol (PG) by forming an ester bond, probably catalyzed by DltD. D-alanylation of LTA plays an important role in modulating the properties of the cell wall in Gram-positive bacteria, influencing the net charge of the cell wall. The sequence is that of D-alanyl carrier protein from Lacticaseibacillus casei (strain BL23) (Lactobacillus casei).